The sequence spans 227 residues: Probable septum site-determining protein MinC (227 aa).

This sequence belongs to the MinC family. Interacts with MinD and FtsZ.

Cell division inhibitor that blocks the formation of polar Z ring septums. Rapidly oscillates between the poles of the cell to destabilize FtsZ filaments that have formed before they mature into polar Z rings. Prevents FtsZ polymerization. This chain is Probable septum site-determining protein MinC, found in Clostridioides difficile (strain 630) (Peptoclostridium difficile).